The sequence spans 398 residues: Protein trichome birefringence-like 45 (398 aa).

Residues 1–21 (MAAVQCLTFLFLFLLQNATSA) form a helical; Signal-anchor for type II membrane protein membrane-spanning segment. Positions 131–133 (GDS) match the GDS motif motif. Positions 375–389 (DCSHWCLPGLPDTWN) match the DCXHWCLPGXXDXWN motif motif.

Belongs to the PC-esterase family. TBL subfamily.

Its subcellular location is the membrane. Functionally, may act as a bridging protein that binds pectin and other cell wall polysaccharides. Probably involved in maintaining esterification of pectins. May be involved in the specific O-acetylation of cell wall polymers. The polypeptide is Protein trichome birefringence-like 45 (TBL45) (Arabidopsis thaliana (Mouse-ear cress)).